The chain runs to 380 residues: Glucose ABC transporter permease protein TsgB13 (380 aa).

10 helical membrane passes run 20-40 (GTPVLTVLAALAVGGVALVAL), 59-81 (QFGLTEVLVRAVPLILAGLAVYL), 94-114 (GQLLLGALAGTWVAVNVSLPA), 115-135 (VALLPLMFLAACVAGAFWAGI), 148-166 (IITSLLLTFVAQELQSYLL), 202-222 (IPLFADVHAGLLVAVAAVVAT), 255-275 (VYLFVFLLGGAFAALGGIAEI), 282-301 (FRAAFAPGYGFTAIPIALLG), 305-325 (AVKVTLAGLFFAVLFVGGSSV), and 328-348 (AFGVPAALVEIIQALVILFLI).

It belongs to the binding-protein-dependent transport system permease family. The complex is composed of two ATP-binding proteins (TsgD13), two transmembrane proteins (TsgB13 and TsgC13) and a solute-binding protein (TsgA13).

The protein localises to the cell membrane. Functionally, part of an ABC transporter complex involved in glucose import. Responsible for the translocation of the substrate across the membrane. In Haloferax volcanii (strain ATCC 29605 / DSM 3757 / JCM 8879 / NBRC 14742 / NCIMB 2012 / VKM B-1768 / DS2) (Halobacterium volcanii), this protein is Glucose ABC transporter permease protein TsgB13 (tsgB13).